The primary structure comprises 108 residues: Complement inhibitor CirpT4 (108 aa).

An N-terminal signal peptide occupies residues 1–19 (MRAFVALFCTLVAFATVIC). 4 cysteine pairs are disulfide-bonded: C40/C64, C59/C98, C76/C99, and C85/C104.

It belongs to the CirpT family. In terms of tissue distribution, expressed in salivary glands.

It localises to the secreted. Functionally, complement inhibitor. Prevents complement-mediated activation of C5 by sterically preventing direct binding of C5 to its convertase (binding with domains MG4 and MG5). Binds C5 at a different binding site than the other tick complement inhibitors OmCI and RaCI3, and the drug eculizumab. Inhibits the complement in human, rat and guinea pig, and also shows a reduced inhibition in rabbit and pig. The sequence is that of Complement inhibitor CirpT4 from Amblyomma americanum (Lone star tick).